The following is a 253-amino-acid chain: Triosephosphate isomerase (253 aa).

9-11 (NWK) is a substrate binding site. The active-site Electrophile is His97. The active-site Proton acceptor is Glu169. Residues Gly175, Ser215, and 236–237 (GG) each bind substrate.

This sequence belongs to the triosephosphate isomerase family. In terms of assembly, homodimer.

It is found in the cytoplasm. It catalyses the reaction D-glyceraldehyde 3-phosphate = dihydroxyacetone phosphate. It participates in carbohydrate biosynthesis; gluconeogenesis. It functions in the pathway carbohydrate degradation; glycolysis; D-glyceraldehyde 3-phosphate from glycerone phosphate: step 1/1. Its function is as follows. Involved in the gluconeogenesis. Catalyzes stereospecifically the conversion of dihydroxyacetone phosphate (DHAP) to D-glyceraldehyde-3-phosphate (G3P). The chain is Triosephosphate isomerase from Staphylococcus aureus (strain Mu50 / ATCC 700699).